The primary structure comprises 237 residues: MSQPFFQFKQFTVWHDKCAMKVGTDGVLLGAWTPVESSARILDIGTGTGLVALMLAQRCSASVIALEIDGKAAQQAAENITRSPWGSRIEVVCQDFRLYSNKNNSLKYDTIVSNPPYFTDSLKCPDSQRNTARHNDNLSYEELLKGVSNLLSPNGTFTVVIPMDASDSFKDIASSQGLYPSRQLLVITKPGAPPKRTLISFTFIKQDCKEEKLLTEVARHRYSDEYIKLTREFYLKM.

Belongs to the methyltransferase superfamily. tRNA (adenine-N(6)-)-methyltransferase family.

It is found in the cytoplasm. It catalyses the reaction adenosine(37) in tRNA1(Val) + S-adenosyl-L-methionine = N(6)-methyladenosine(37) in tRNA1(Val) + S-adenosyl-L-homocysteine + H(+). In terms of biological role, specifically methylates the adenine in position 37 of tRNA(1)(Val) (anticodon cmo5UAC). The protein is tRNA1(Val) (adenine(37)-N6)-methyltransferase of Bacteroides fragilis (strain YCH46).